We begin with the raw amino-acid sequence, 140 residues long: Nucleoside diphosphate kinase (140 aa).

Residues Lys11, Phe59, Arg87, Thr93, Arg104, and Asn114 each coordinate ATP. His117 (pros-phosphohistidine intermediate) is an active-site residue.

Belongs to the NDK family. In terms of assembly, homotetramer. Mg(2+) serves as cofactor.

It is found in the cytoplasm. The catalysed reaction is a 2'-deoxyribonucleoside 5'-diphosphate + ATP = a 2'-deoxyribonucleoside 5'-triphosphate + ADP. It carries out the reaction a ribonucleoside 5'-diphosphate + ATP = a ribonucleoside 5'-triphosphate + ADP. In terms of biological role, major role in the synthesis of nucleoside triphosphates other than ATP. The ATP gamma phosphate is transferred to the NDP beta phosphate via a ping-pong mechanism, using a phosphorylated active-site intermediate. The sequence is that of Nucleoside diphosphate kinase from Rickettsia prowazekii (strain Madrid E).